The primary structure comprises 979 residues: Zinc finger BED domain-containing protein 6 (979 aa).

The interval 1-89 (MSVCTLSVPV…ILAKKFSKDL (89 aa)) is required for nucleolar localization. Residues 130 to 187 (AKTSIVWHFFHVDPQYTWRAICNLCEKSVSRGKPGSHLGTSTLQRHLQARHSPHWTRA) form a BED-type 1 zinc finger. Residues Cys-151, Cys-154, His-175, and His-180 each contribute to the Zn(2+) site. Positions 207–232 (PSSGSNGSFEYIPTDPLDDNRMGKKH) are disordered. The BED-type 2 zinc-finger motif lies at 264-321 (AKTSAVWNFFYTDPQHISRAVCNICKRSVSRGRPGSHLGTSTLQRHLQATHPIHWAVA). Zn(2+) contacts are provided by Cys-285, Cys-288, His-309, and His-314. A disordered region spans residues 333-383 (DEAETERSDLLSDTLHGEKSTGSQDLTAEDLSDSDSDEPMLEVENRSESPI). Positions 337–351 (TERSDLLSDTLHGEK) are enriched in basic and acidic residues. Residues 359-373 (TAEDLSDSDSDEPML) are compositionally biased toward acidic residues. Ser-381 is modified (phosphoserine). An HATC (Hobo-Ac-Tam3) domain region spans residues 866–948 (VVDEYFKEKY…EQLMFLKMNL (83 aa)).

In terms of tissue distribution, expressed in pancreatic islet cells (at protein level).

It localises to the nucleus. It is found in the nucleolus. The protein localises to the cytoplasm. Its function is as follows. Transcriptional repressor which binds to the consensus sequence 5'-GCTCGC-3', transcription regulation may be tissue-specific. Regulates the expression of target genes such as: IGF2, PGAP6/TMEM8, ENHO, and PIANP. Acts as a transcriptional repressor of growth factor IGF2, thereby negatively regulating postnatal growth of muscles and internal organs, especially in females. Negatively regulates myoblast differentiation and myoblast mitochondrial activity via its regulation of IGF2 transcription. Negatively regulates the cell cycle of myoblasts, potentially via transcriptional regulation of the E2F family of transcription factors such as: E2F1 and E2F2. Positively regulates the cell cycle and survival of pancreatic beta cells. Binds to the CDH2 gene and may directly repress CDH2 transcription. Probably by controlling CDH2 expression, regulates pancreatic beta cell adhesion, and formation of cell-to-cell junctions between pancreatic beta cells and neural crest stem cells. May also play a role in embryonic beta cell differentiation. May play a role in insulin sensitivity and glucose clearance. This Homo sapiens (Human) protein is Zinc finger BED domain-containing protein 6.